We begin with the raw amino-acid sequence, 1199 residues long: Chromatin structure-remodeling complex subunit snf21 (1199 aa).

The region spanning Q256–E328 is the HSA domain. Residues I429–R594 form the Helicase ATP-binding domain. D442–T449 is an ATP binding site. The short motif at D544–H547 is the DEGH box element. The Helicase C-terminal domain occupies L740 to L903. A disordered region spans residues M1017–T1059. In terms of domain architecture, Bromo spans E1061–L1171.

It belongs to the SNF2/RAD54 helicase family. Component of the RSC complex composed of at least arp9, arp42, rsc1, rsc4, rsc7, rsc9, rsc58, sfh1, snf21, ssr1, ssr2, ssr3 and ssr4. The complex interacts with histone and histone variant components of centromeric chromatin.

It localises to the nucleus. Its function is as follows. Helicase. Component of the chromatin structure remodeling complex (RSC), which is involved in transcription regulation and nucleosome positioning. Controls particularly membrane and organelle development genes. The protein is Chromatin structure-remodeling complex subunit snf21 (snf21) of Schizosaccharomyces pombe (strain 972 / ATCC 24843) (Fission yeast).